The sequence spans 322 residues: Pantothenate kinase (322 aa).

Residue 100 to 107 (GSVAVGKS) coordinates ATP.

The protein belongs to the prokaryotic pantothenate kinase family.

It is found in the cytoplasm. The catalysed reaction is (R)-pantothenate + ATP = (R)-4'-phosphopantothenate + ADP + H(+). It participates in cofactor biosynthesis; coenzyme A biosynthesis; CoA from (R)-pantothenate: step 1/5. The chain is Pantothenate kinase from Brucella abortus (strain 2308).